Here is a 451-residue protein sequence, read N- to C-terminus: Adenylyltransferase and sulfurtransferase MOCS3-1 (451 aa).

The interval 42–62 (GEDSDEAEESSNDMPTPQTKL) is disordered. The segment covering 43-52 (EDSDEAEESS) has biased composition (acidic residues). Position 60 is a phosphothreonine (Thr-60). Residues Gly-99, Asp-120, 127–131 (SNLHR), Lys-144, and 188–189 (DN) contribute to the ATP site. Residues Cys-229 and Cys-232 each contribute to the Zn(2+) site. Residue Cys-246 is the Glycyl thioester intermediate; for adenylyltransferase activity of the active site. 2 residues coordinate Zn(2+): Cys-304 and Cys-307. The Rhodanese domain occupies 353–449 (QSQPHLLLDV…WTGSVDATFP (97 aa)). The Cysteine persulfide intermediate; for sulfurtransferase activity role is filled by Cys-408.

The protein in the N-terminal section; belongs to the HesA/MoeB/ThiF family. UBA4 subfamily. Requires Zn(2+) as cofactor.

It is found in the cytoplasm. The catalysed reaction is [molybdopterin-synthase sulfur-carrier protein]-C-terminal Gly-Gly + ATP + H(+) = [molybdopterin-synthase sulfur-carrier protein]-C-terminal Gly-Gly-AMP + diphosphate. The enzyme catalyses [molybdopterin-synthase sulfur-carrier protein]-C-terminal Gly-Gly-AMP + S-sulfanyl-L-cysteinyl-[cysteine desulfurase] + AH2 = [molybdopterin-synthase sulfur-carrier protein]-C-terminal-Gly-aminoethanethioate + L-cysteinyl-[cysteine desulfurase] + A + AMP + 2 H(+). It functions in the pathway tRNA modification; 5-methoxycarbonylmethyl-2-thiouridine-tRNA biosynthesis. The protein operates within cofactor biosynthesis; molybdopterin biosynthesis. Its function is as follows. Plays a central role in 2-thiolation of mcm(5)S(2)U at tRNA wobble positions of cytosolic tRNA(Lys), tRNA(Glu) and tRNA(Gln). Also essential during biosynthesis of the molybdenum cofactor. Acts by mediating the C-terminal thiocarboxylation of sulfur carriers URM1 and MOCS2A. Its N-terminus first activates URM1 and MOCS2A as acyl-adenylates (-COAMP), then the persulfide sulfur on the catalytic cysteine is transferred to URM1 and MOCS2A to form thiocarboxylation (-COSH) of their C-terminus. The reaction probably involves hydrogen sulfide that is generated from the persulfide intermediate and that acts as a nucleophile towards URM1 and MOCS2A. Subsequently, a transient disulfide bond is formed. Does not use thiosulfate as sulfur donor; NFS1 probably acting as a sulfur donor for thiocarboxylation reactions. This Drosophila pseudoobscura pseudoobscura (Fruit fly) protein is Adenylyltransferase and sulfurtransferase MOCS3-1.